A 173-amino-acid polypeptide reads, in one-letter code: MTDDLIKKAIGETIGELSATSGEEIYVVEAAIRAGGRKIELTVDTDKGVSIDQCAKLSRAIRARLEACEEDSMLSSGEFDLMVSSPGIGEPIQVQRQYLRHLGRLIRVNYLDEEEQPKEITGKLLEAAVGPEAEQPSITIEAVKEGRKKRTAGEPPVTIRLADVVRAVVQTEL.

It belongs to the RimP family.

It localises to the cytoplasm. Its function is as follows. Required for maturation of 30S ribosomal subunits. The protein is Ribosome maturation factor RimP of Chlorobaculum tepidum (strain ATCC 49652 / DSM 12025 / NBRC 103806 / TLS) (Chlorobium tepidum).